The primary structure comprises 308 residues: Paired box protein 3 homolog (308 aa).

Residues 13–140 constitute a DNA-binding region (paired); the sequence is GQGRVNQLGG…PAIKRLIGNK (128 aa). Residues 16 to 72 are PAI subdomain; sequence RVNQLGGVFINGRPLPIHVRHAIISMAKKGIKPCHISRQLKVSHGAVSKILNRYAET. The RED subdomain stretch occupies residues 92-140; that stretch reads AVEKEILIACDENPQMSAAELRDWLIHKDICTKGNAPTVPAIKRLIGNK. Positions 168–191 are disordered; it reads CSKSSSDDEEGSSPSNDASSRRNR. Positions 187-246 form a DNA-binding region, homeobox; sequence SRRNRTSFTAEQLDVLENAFRADTYPHANARESISKETGLSEEKIMTWFSNRRARCRKNM.

This sequence belongs to the paired homeobox family.

Its subcellular location is the nucleus. Functionally, transcriptional activator. Regulates the lateral/ventral epidermal cell fate decision. In Caenorhabditis elegans, this protein is Paired box protein 3 homolog.